The primary structure comprises 297 residues: ATP synthase subunit gamma, mitochondrial (297 aa).

The protein belongs to the ATPase gamma chain family. As to quaternary structure, F-type ATPases have 2 components, CF(1) - the catalytic core - and CF(0) - the membrane proton channel. CF(1) has five subunits: alpha(3), beta(3), gamma(1), delta(1), epsilon(1). CF(0) has three main subunits: a, b and c.

It is found in the mitochondrion. The protein localises to the mitochondrion inner membrane. Mitochondrial membrane ATP synthase (F(1)F(0) ATP synthase or Complex V) produces ATP from ADP in the presence of a proton gradient across the membrane which is generated by electron transport complexes of the respiratory chain. F-type ATPases consist of two structural domains, F(1) - containing the extramembraneous catalytic core, and F(0) - containing the membrane proton channel, linked together by a central stalk and a peripheral stalk. During catalysis, ATP synthesis in the catalytic domain of F(1) is coupled via a rotary mechanism of the central stalk subunits to proton translocation. Part of the complex F(1) domain and the central stalk which is part of the complex rotary element. The gamma subunit protrudes into the catalytic domain formed of alpha(3)beta(3). Rotation of the central stalk against the surrounding alpha(3)beta(3) subunits leads to hydrolysis of ATP in three separate catalytic sites on the beta subunits. The protein is ATP synthase subunit gamma, mitochondrial of Drosophila melanogaster (Fruit fly).